The primary structure comprises 72 residues: Translation initiation factor IF-1 (72 aa).

One can recognise an S1-like domain in the interval 1–72; the sequence is MSKEDVIEVE…TRGRITWRKK (72 aa).

This sequence belongs to the IF-1 family. Component of the 30S ribosomal translation pre-initiation complex which assembles on the 30S ribosome in the order IF-2 and IF-3, IF-1 and N-formylmethionyl-tRNA(fMet); mRNA recruitment can occur at any time during PIC assembly.

It is found in the cytoplasm. One of the essential components for the initiation of protein synthesis. Stabilizes the binding of IF-2 and IF-3 on the 30S subunit to which N-formylmethionyl-tRNA(fMet) subsequently binds. Helps modulate mRNA selection, yielding the 30S pre-initiation complex (PIC). Upon addition of the 50S ribosomal subunit IF-1, IF-2 and IF-3 are released leaving the mature 70S translation initiation complex. This chain is Translation initiation factor IF-1, found in Alkaliphilus metalliredigens (strain QYMF).